Reading from the N-terminus, the 236-residue chain is UPF0257 lipoprotein YnfC (236 aa).

The signal sequence occupies residues 1–16 (MKYKLLPCLLAIFLTG). Cys17 carries N-palmitoyl cysteine lipidation. The S-diacylglycerol cysteine moiety is linked to residue Cys17.

Belongs to the UPF0257 family.

The protein localises to the cell membrane. In Escherichia coli O7:K1 (strain IAI39 / ExPEC), this protein is UPF0257 lipoprotein YnfC.